We begin with the raw amino-acid sequence, 230 residues long: UPF0688 protein C1orf174 homolog (230 aa).

Disordered regions lie at residues 1–85 and 97–166; these read MRSR…SLPK and AEDS…VRAS. Residues 11–30 show a composition bias toward low complexity; that stretch reads RSSARLRARSYSSASLASAR. Over residues 31–48 the composition is skewed to polar residues; that stretch reads DVTSSTSAKTTCLASSSH. A compositionally biased stretch (basic and acidic residues) spans 49 to 78; the sequence is KATDRRTSKKFKYDKGHLVKAELQKLDPKS. Serine 180 is modified (phosphoserine).

This sequence belongs to the UPF0688 family.

It localises to the nucleus. The protein is UPF0688 protein C1orf174 homolog of Mus musculus (Mouse).